The chain runs to 200 residues: Probable gluconokinase (200 aa).

34 to 41 (GVSGSGKT) is an ATP binding site.

Belongs to the gluconokinase GntK/GntV family.

It catalyses the reaction D-gluconate + ATP = 6-phospho-D-gluconate + ADP + H(+). Its pathway is carbohydrate acid metabolism; D-gluconate degradation. This Dictyostelium discoideum (Social amoeba) protein is Probable gluconokinase.